A 169-amino-acid chain; its full sequence is Der GTPase-activating protein YihI (169 aa).

Disordered stretches follow at residues 1–100 (MKPS…AELE) and 144–169 (GLSY…LRGN). Positions 10 to 19 (SKGHAKARRK) are enriched in basic residues. Positions 20–30 (TREELDQEARD) are enriched in basic and acidic residues. Positions 31-40 (RKRQKKRRGH) are enriched in basic residues. Over residues 49 to 58 (GNTSSGSKGQ) the composition is skewed to polar residues. Positions 147–159 (YDDDEEEEEDEKQ) are enriched in acidic residues. A compositionally biased stretch (basic and acidic residues) spans 160–169 (EDMMRLLRGN).

Belongs to the YihI family. As to quaternary structure, interacts with Der.

Its function is as follows. A GTPase-activating protein (GAP) that modifies Der/EngA GTPase function. May play a role in ribosome biogenesis. The protein is Der GTPase-activating protein YihI of Escherichia coli (strain SMS-3-5 / SECEC).